A 77-amino-acid polypeptide reads, in one-letter code: Large ribosomal subunit protein bL28 (77 aa).

This sequence belongs to the bacterial ribosomal protein bL28 family.

The chain is Large ribosomal subunit protein bL28 from Laribacter hongkongensis (strain HLHK9).